A 452-amino-acid chain; its full sequence is Glycine receptor subunit alpha-2 (452 aa).

The N-terminal stretch at 1 to 27 (MYRQLVNILTALFAFFLGTNHFREAFC) is a signal peptide. Residues 28 to 256 (KDHDSRSGKH…KFHLERQMGY (229 aa)) are Extracellular-facing. The N-linked (GlcNAc...) asparagine glycan is linked to N72. R99 contributes to the glycine binding site. Strychnine is bound at residue R99. An N-linked (GlcNAc...) asparagine glycan is attached at N103. Position 163 (S163) interacts with glycine. A disulfide bridge connects residues C172 and C186. Zn(2+) contacts are provided by E226 and E228. Cysteines 232 and 243 form a disulfide. Residue T238 coordinates glycine. Zn(2+) is bound at residue H249. Residues 257–278 (YLIQMYIPSLLIVILSWVSFWI) form a helical membrane-spanning segment. Topologically, residues 279–283 (NMDAA) are cytoplasmic. Residues 284-304 (PARVALGITTVLTMTTQSSGS) traverse the membrane as a helical segment. Topologically, residues 305 to 315 (RASLPKVSYVK) are extracellular. A helical transmembrane segment spans residues 316 to 336 (AIDIWMAVCLLFVFAALLEYA). Residues 337–420 (AVNFVSRQHK…FVDRAKRIDT (84 aa)) lie on the Cytoplasmic side of the membrane. A helical transmembrane segment spans residues 421-441 (ISRAAFPLAFLIFNIFYWITY). Residues 442 to 452 (KIIRHEDVHKK) lie on the Extracellular side of the membrane.

Belongs to the ligand-gated ion channel (TC 1.A.9) family. Glycine receptor (TC 1.A.9.3) subfamily. GLRA2 sub-subfamily. As to quaternary structure, interacts with GLRB. Heteropentamer composed of GLRA2 and GLRB; functional GLRB-GLRA2 heteropentamers contain four GLRA2 subunits and one GLRB subunit, although alternative subunit composition cannot be excluded. Homopentamer (in vitro). Both homopentamers and heteropentamers form functional ion channels, but their characteristics are subtly different. In terms of tissue distribution, detected in the retina inner plexiform layer (at protein level). Detected in neonate retina. Detected in brain. Detected in spinal cord, with higher levels in the dorsal horn.

The protein localises to the postsynaptic cell membrane. It is found in the synapse. It localises to the cell membrane. Its subcellular location is the cell projection. The enzyme catalyses chloride(in) = chloride(out). Channel opening is triggered by extracellular glycine. Channel opening is also triggered by taurine and beta-alanine. Inhibited by strychnine. Inhibited by picrotoxin. Functionally, subunit of heteromeric glycine-gated chloride channels. Plays a role in synaptic plasticity. Contributes to the generation of inhibitory postsynaptic currents, and is involved in the down-regulation of neuronal excitability. Plays a role in cellular responses to ethanol. This chain is Glycine receptor subunit alpha-2, found in Mus musculus (Mouse).